An 80-amino-acid chain; its full sequence is Protein CEBPZOS (80 aa).

A helical transmembrane segment spans residues 15–32; that stretch reads GVLVAELVGVFGAYFLFS.

Its subcellular location is the mitochondrion membrane. The protein is Protein CEBPZOS of Homo sapiens (Human).